The chain runs to 149 residues: Sec-independent protein translocase protein TatB (149 aa).

A helical membrane pass occupies residues 1-22 (MFDGIGFMELLLIGVLGLIVLG). The segment covering 86–113 (LKQAAQSVNRPYQVQDTPSAQDNQIHNP) has biased composition (polar residues). The interval 86 to 149 (LKQAAQSVNR…DPRSNTKANG (64 aa)) is disordered. The segment covering 114 to 135 (ASQTVSTEASSTSASSAPKSES) has biased composition (low complexity).

The protein belongs to the TatB family. In terms of assembly, the Tat system comprises two distinct complexes: a TatABC complex, containing multiple copies of TatA, TatB and TatC subunits, and a separate TatA complex, containing only TatA subunits. Substrates initially bind to the TatABC complex, which probably triggers association of the separate TatA complex to form the active translocon.

Its subcellular location is the cell inner membrane. Part of the twin-arginine translocation (Tat) system that transports large folded proteins containing a characteristic twin-arginine motif in their signal peptide across membranes. Together with TatC, TatB is part of a receptor directly interacting with Tat signal peptides. TatB may form an oligomeric binding site that transiently accommodates folded Tat precursor proteins before their translocation. The chain is Sec-independent protein translocase protein TatB from Shewanella oneidensis (strain ATCC 700550 / JCM 31522 / CIP 106686 / LMG 19005 / NCIMB 14063 / MR-1).